Here is a 327-residue protein sequence, read N- to C-terminus: Biotin synthase (327 aa).

Residues 48–278 (YCGDGVGLCM…DRHITVCGGR (231 aa)) form the Radical SAM core domain. The [4Fe-4S] cluster site is built by Cys66, Cys70, and Cys73. [2Fe-2S] cluster is bound by residues Ser143 and Cys203.

Belongs to the radical SAM superfamily. Biotin synthase family. Homodimer. [4Fe-4S] cluster serves as cofactor. The cofactor is [2Fe-2S] cluster.

The catalysed reaction is (4R,5S)-dethiobiotin + (sulfur carrier)-SH + 2 reduced [2Fe-2S]-[ferredoxin] + 2 S-adenosyl-L-methionine = (sulfur carrier)-H + biotin + 2 5'-deoxyadenosine + 2 L-methionine + 2 oxidized [2Fe-2S]-[ferredoxin]. It participates in cofactor biosynthesis; biotin biosynthesis; biotin from 7,8-diaminononanoate: step 2/2. Its function is as follows. Catalyzes the conversion of dethiobiotin (DTB) to biotin by the insertion of a sulfur atom into dethiobiotin via a radical-based mechanism. The polypeptide is Biotin synthase (Syntrophotalea carbinolica (strain DSM 2380 / NBRC 103641 / GraBd1) (Pelobacter carbinolicus)).